We begin with the raw amino-acid sequence, 547 residues long: Chaperonin GroEL 2 (547 aa).

Residues 30–33 (TLGP), lysine 51, 87–91 (DGTTT), glycine 415, 479–481 (NAA), and aspartate 495 contribute to the ATP site. The tract at residues 525-547 (PKEESAAPAGGGMGGMGGMGGMM) is disordered. Residues 533-547 (AGGGMGGMGGMGGMM) show a composition bias toward gly residues.

This sequence belongs to the chaperonin (HSP60) family. Forms a cylinder of 14 subunits composed of two heptameric rings stacked back-to-back. Interacts with the co-chaperonin GroES.

Its subcellular location is the cytoplasm. The catalysed reaction is ATP + H2O + a folded polypeptide = ADP + phosphate + an unfolded polypeptide.. Together with its co-chaperonin GroES, plays an essential role in assisting protein folding. The GroEL-GroES system forms a nano-cage that allows encapsulation of the non-native substrate proteins and provides a physical environment optimized to promote and accelerate protein folding. In Anaeromyxobacter dehalogenans (strain 2CP-C), this protein is Chaperonin GroEL 2.